The following is a 211-amino-acid chain: UPF0637 protein Bsph_1379 (211 aa).

Belongs to the UPF0637 family.

The chain is UPF0637 protein Bsph_1379 from Lysinibacillus sphaericus (strain C3-41).